Here is a 159-residue protein sequence, read N- to C-terminus: Cytochrome c-type biogenesis CcmH-like mitochondrial protein (159 aa).

Residues 1–82 are Mitochondrial intermembrane-facing; that stretch reads MEKTDEERKK…ETVLYAPKFD (82 aa). Heme contacts are provided by Cys-27 and Cys-30. Residues 83-105 traverse the membrane as a helical segment; it reads LQTAALWLTPVIIAGGTAAGIVY. Residues 106–159 lie on the Mitochondrial matrix side of the membrane; it reads QKHRLRKNVDIMALNLIRGVPLTPKERVTILDVLIPPSPPPQGVVSRLRRWLNR.

It belongs to the CcmH/CycL/Ccl2/NrfF family. In terms of assembly, interacts (via N-terminus) with CYTC-1. Interacts with CCMFN1 and CCMFN2.

It localises to the mitochondrion inner membrane. In terms of biological role, plays a central role in mitochondrial cytochrome c maturation. Probable component of a heme lyase complex involved in the reduction of apocytochrome c. Forms a complex with CCMF proteins (CCMFC, CCMFN1 and CCMFN2) that performs the assembly of heme with c-type apocytochromes in mitochondria. The sequence is that of Cytochrome c-type biogenesis CcmH-like mitochondrial protein from Arabidopsis thaliana (Mouse-ear cress).